A 171-amino-acid chain; its full sequence is MAGYKENNNIDNNYIEKLVNIRRVVKVVKGGRIFGFSALVVVGDGNGKVGYGTGKAREVPVAIQKAMDKARKAMKNVPLVNGTLHYSIISNVGAAKVYMQPASEGTGVIAGGPMRSVLEAVGVHNILAKCNGTRNPISVVRATVEGLTSMLSPQLVATKRGMTVDQITGEE.

One can recognise an S5 DRBM domain in the interval 14–77 (YIEKLVNIRR…DKARKAMKNV (64 aa)).

This sequence belongs to the universal ribosomal protein uS5 family. In terms of assembly, part of the 30S ribosomal subunit. Contacts proteins S4 and S8.

Its function is as follows. With S4 and S12 plays an important role in translational accuracy. Functionally, located at the back of the 30S subunit body where it stabilizes the conformation of the head with respect to the body. This is Small ribosomal subunit protein uS5 from Vesicomyosocius okutanii subsp. Calyptogena okutanii (strain HA).